The primary structure comprises 219 residues: Pyridoxine/pyridoxamine 5'-phosphate oxidase (219 aa).

The interval 1 to 23 (MTSSVIPPSPSAADYAAEGDRPL) is disordered. FMN contacts are provided by residues 66–71 (RIVLLK), 81–82 (FT), Lys-88, and Gln-110. Position 71 (Lys-71) interacts with substrate. Substrate contacts are provided by Tyr-128, Arg-132, and Ser-136. FMN contacts are provided by residues 145-146 (QS) and Trp-191. Residue 197–199 (RMH) participates in substrate binding. Arg-201 contacts FMN.

The protein belongs to the pyridoxamine 5'-phosphate oxidase family. Homodimer. Requires FMN as cofactor.

The catalysed reaction is pyridoxamine 5'-phosphate + O2 + H2O = pyridoxal 5'-phosphate + H2O2 + NH4(+). It catalyses the reaction pyridoxine 5'-phosphate + O2 = pyridoxal 5'-phosphate + H2O2. It functions in the pathway cofactor metabolism; pyridoxal 5'-phosphate salvage; pyridoxal 5'-phosphate from pyridoxamine 5'-phosphate: step 1/1. Its pathway is cofactor metabolism; pyridoxal 5'-phosphate salvage; pyridoxal 5'-phosphate from pyridoxine 5'-phosphate: step 1/1. Catalyzes the oxidation of either pyridoxine 5'-phosphate (PNP) or pyridoxamine 5'-phosphate (PMP) into pyridoxal 5'-phosphate (PLP). The protein is Pyridoxine/pyridoxamine 5'-phosphate oxidase of Hyphomonas neptunium (strain ATCC 15444).